The following is a 240-amino-acid chain: uncharacterized protein (240 aa).

The C2H2-type zinc finger occupies 3–27; the sequence is LKCLECDKLLSSIEMAEFHSTKTSH. Disordered regions lie at residues 21-43 and 120-171; these read HSTK…RSPE and AEIE…RFSI. Positions 120–136 are enriched in basic and acidic residues; sequence AEIERDKKRRAAERENK. The span at 155-166 shows a compositional bias: low complexity; it reads SSSTCTRTPPTS.

This is an uncharacterized protein from Schizosaccharomyces pombe (strain 972 / ATCC 24843) (Fission yeast).